Consider the following 330-residue polypeptide: GTP 3',8-cyclase (330 aa).

The Radical SAM core domain maps to 14–225 (RFGRTVDYVR…RERLADAYPE (212 aa)). Position 23 (Arg23) interacts with GTP. 2 residues coordinate [4Fe-4S] cluster: Cys30 and Cys34. S-adenosyl-L-methionine is bound at residue Tyr36. Cys37 serves as a coordination point for [4Fe-4S] cluster. Arg70 contributes to the GTP binding site. Gly74 is an S-adenosyl-L-methionine binding site. GTP is bound at residue Thr101. Residue Ser125 participates in S-adenosyl-L-methionine binding. Lys162 contributes to the GTP binding site. Residues Cys259 and Cys262 each coordinate [4Fe-4S] cluster. 264–266 (KLR) serves as a coordination point for GTP. [4Fe-4S] cluster is bound at residue Cys276. Over residues 309 to 318 (KPKDGLKSSH) the composition is skewed to basic and acidic residues. Residues 309–330 (KPKDGLKSSHDTAASSMSQIGG) form a disordered region. A compositionally biased stretch (polar residues) spans 319–330 (DTAASSMSQIGG).

This sequence belongs to the radical SAM superfamily. MoaA family. Monomer and homodimer. It depends on [4Fe-4S] cluster as a cofactor.

The catalysed reaction is GTP + AH2 + S-adenosyl-L-methionine = (8S)-3',8-cyclo-7,8-dihydroguanosine 5'-triphosphate + 5'-deoxyadenosine + L-methionine + A + H(+). Its pathway is cofactor biosynthesis; molybdopterin biosynthesis. Catalyzes the cyclization of GTP to (8S)-3',8-cyclo-7,8-dihydroguanosine 5'-triphosphate. This is GTP 3',8-cyclase from Chlorobaculum tepidum (strain ATCC 49652 / DSM 12025 / NBRC 103806 / TLS) (Chlorobium tepidum).